Reading from the N-terminus, the 464-residue chain is Chromosomal replication initiator protein DnaA (464 aa).

The tract at residues 1 to 82 is domain I, interacts with DnaA modulators; the sequence is MSLSLWQQCL…LLRFEVGSKP (82 aa). Residues 82–127 form a domain II region; sequence PPQMAVLQPASQHASEAPSQAAVARPRPSRPSWDNAPVQPELSYRS. The disordered stretch occupies residues 91–118; that stretch reads ASQHASEAPSQAAVARPRPSRPSWDNAP. The tract at residues 128–344 is domain III, AAA+ region; the sequence is NVNPKHNFDN…GALNRVIANA (217 aa). ATP contacts are provided by G172, G174, K175, and T176. Positions 345–464 are domain IV, binds dsDNA; sequence NFTGRAITID…FSNLIRTLSS (120 aa).

The protein belongs to the DnaA family. In terms of assembly, oligomerizes as a right-handed, spiral filament on DNA at oriC.

It localises to the cytoplasm. Functionally, plays an essential role in the initiation and regulation of chromosomal replication. ATP-DnaA binds to the origin of replication (oriC) to initiate formation of the DNA replication initiation complex once per cell cycle. Binds the DnaA box (a 9 base pair repeat at the origin) and separates the double-stranded (ds)DNA. Forms a right-handed helical filament on oriC DNA; dsDNA binds to the exterior of the filament while single-stranded (ss)DNA is stabiized in the filament's interior. The ATP-DnaA-oriC complex binds and stabilizes one strand of the AT-rich DNA unwinding element (DUE), permitting loading of DNA polymerase. After initiation quickly degrades to an ADP-DnaA complex that is not apt for DNA replication. Binds acidic phospholipids. The sequence is that of Chromosomal replication initiator protein DnaA from Sodalis glossinidius (strain morsitans).